Reading from the N-terminus, the 488-residue chain is (S)-N-methylcoclaurine 3'-hydroxylase isozyme 2 (488 aa).

Residues 3–23 form a helical membrane-spanning segment; sequence VVTVALIAVIISSILYLLFGS. Residue Cys430 participates in heme binding.

It belongs to the cytochrome P450 family. Heme serves as cofactor.

The protein localises to the endoplasmic reticulum membrane. It localises to the microsome membrane. It catalyses the reaction (S)-N-methylcoclaurine + reduced [NADPH--hemoprotein reductase] + O2 = (S)-3'-hydroxy-N-methylcoclaurine + oxidized [NADPH--hemoprotein reductase] + H2O + H(+). It functions in the pathway alkaloid biosynthesis; (S)-reticuline biosynthesis; (S)-reticuline from (S)-norcoclaurine: step 3/4. 3'-hydroxylation of (S)-N-methylcoclaurine. The sequence is that of (S)-N-methylcoclaurine 3'-hydroxylase isozyme 2 (CYP80B2) from Eschscholzia californica (California poppy).